The primary structure comprises 485 residues: Glycogen synthase (485 aa).

Lys15 serves as a coordination point for ADP-alpha-D-glucose.

It belongs to the glycosyltransferase 1 family. Bacterial/plant glycogen synthase subfamily.

The enzyme catalyses [(1-&gt;4)-alpha-D-glucosyl](n) + ADP-alpha-D-glucose = [(1-&gt;4)-alpha-D-glucosyl](n+1) + ADP + H(+). Its pathway is glycan biosynthesis; glycogen biosynthesis. Functionally, synthesizes alpha-1,4-glucan chains using ADP-glucose. The protein is Glycogen synthase of Rhodospirillum rubrum (strain ATCC 11170 / ATH 1.1.1 / DSM 467 / LMG 4362 / NCIMB 8255 / S1).